The sequence spans 742 residues: Collectin-12 (742 aa).

At 1 to 37 (MKDDFAEEEEVQSFGYKRFGIQEGTQCTKCKNNWALK) the chain is on the cytoplasmic side. The chain crosses the membrane as a helical; Signal-anchor for type II membrane protein span at residues 38-58 (FSIVLLYILCALLTITVAILG). Over 59 to 742 (YKVVEKMDNV…EREAVPSSIL (684 aa)) the chain is Extracellular. An N-linked (GlcNAc...) asparagine glycan is attached at Asn67. Residues 73 to 142 (ETSHQTYDNK…KDTLEKLQAN (70 aa)) are a coiled coil. N-linked (GlcNAc...) asparagine glycans are attached at residues Asn159 and Asn168. Positions 205-254 (NLNNLNLTQVQQRNLISNLQQSVDDTSLAIQRIKNDFQNLQQVFLQAKKD) form a coiled coil. N-linked (GlcNAc...) asparagine glycosylation occurs at Asn271. Residues 439 to 608 (TILQGPPGPR…TPASEVNGCP (170 aa)) form a disordered region. 2 consecutive Collagen-like domains span residues 452-511 (GDRG…KGSR) and 527-586 (GPPG…PGPS). Residues 501–514 (SKGSQGPKGSRGSP) are compositionally biased toward low complexity. Positions 516-532 (KPGPQGPSGDPGPPGPP) are enriched in pro residues. The span at 534–556 (KDGLPGPQGPPGFQGLQGTVGEP) shows a compositional bias: low complexity. The span at 571–585 (PGMPGPKGPPGPPGP) shows a compositional bias: pro residues. Disulfide bonds link Cys607/Cys618, Cys635/Cys730, and Cys708/Cys722. One can recognise a C-type lectin domain in the interval 614 to 731 (FTDKCYYFSL…CDEINNFICE (118 aa)). Residues Phe644, Asn646, Glu650, Asp670, and Glu674 each coordinate Ca(2+). The a carbohydrate site is built by Lys691, Gln694, and Asp696. The Ca(2+) site is built by Gln694, Asp696, Asn697, Glu706, Asp707, Asn718, Asp719, and Glu731. Position 706 (Glu706) interacts with a carbohydrate. Residues Asn718 and Asp719 each contribute to the a carbohydrate site.

The extracellular domain forms a stable trimer. The extracellular domain interacts with fibrillar amyloid-beta peptide. As to expression, expressed in vascular endothelial cells in the heart, in perivascular macrophage and smooth muscle cells. Expressed in plaques-surrounding reactive astrocytes located in cerebral cortex and hippocampus and in leptomeningeal vessels showing characteristics of cerebral amyloid angiopathy (CAA) in a double transgenic mouse model of Alzheimer disease (at protein level). Strongly expressed in lung. Moderately expressed in heart, skeletal muscle, spleen, liver, brain, colon, testis, stomach and kidney. Expressed in neonatal astrocytes. Expressed in reactive astrocytes and vascular/perivascular cells in the brain of a double transgenic mouse model of Alzheimer disease.

The protein resides in the membrane. Its function is as follows. Scavenger receptor that displays several functions associated with host defense. Promotes binding and phagocytosis of Gram-positive, Gram-negative bacteria and yeast. Also binds to sialyl Lewis X or a trisaccharide and asialo-orosomucoid (ASOR). Mediates the recognition, internalization and degradation of oxidatively modified low density lipoprotein (oxLDL) by vascular endothelial cells. Binds to several carbohydrates including Gal-type ligands, D-galactose, L- and D-fucose, GalNAc, T and Tn antigens in a calcium-dependent manner and internalizes specifically GalNAc in nurse-like cells. In Mus musculus (Mouse), this protein is Collectin-12 (Colec12).